A 323-amino-acid polypeptide reads, in one-letter code: tRNA U34 carboxymethyltransferase (323 aa).

Residues K91, W105, K110, G130, 181–182 (IE), M196, Y200, and R315 each bind carboxy-S-adenosyl-L-methionine.

The protein belongs to the class I-like SAM-binding methyltransferase superfamily. CmoB family. Homotetramer.

The catalysed reaction is carboxy-S-adenosyl-L-methionine + 5-hydroxyuridine(34) in tRNA = 5-carboxymethoxyuridine(34) in tRNA + S-adenosyl-L-homocysteine + H(+). Its function is as follows. Catalyzes carboxymethyl transfer from carboxy-S-adenosyl-L-methionine (Cx-SAM) to 5-hydroxyuridine (ho5U) to form 5-carboxymethoxyuridine (cmo5U) at position 34 in tRNAs. The chain is tRNA U34 carboxymethyltransferase from Sodalis glossinidius (strain morsitans).